The following is a 253-amino-acid chain: Purine nucleoside phosphorylase DR_1966 (253 aa).

Residues H72, C106, and H123 each contribute to the Zn(2+) site.

The protein belongs to the purine nucleoside phosphorylase YfiH/LACC1 family. In terms of assembly, homodimer. Cu(2+) serves as cofactor. It depends on Zn(2+) as a cofactor.

The catalysed reaction is adenosine + phosphate = alpha-D-ribose 1-phosphate + adenine. It catalyses the reaction S-methyl-5'-thioadenosine + phosphate = 5-(methylsulfanyl)-alpha-D-ribose 1-phosphate + adenine. The enzyme catalyses inosine + phosphate = alpha-D-ribose 1-phosphate + hypoxanthine. It carries out the reaction adenosine + H2O + H(+) = inosine + NH4(+). Its function is as follows. Purine nucleoside enzyme that catalyzes the phosphorolysis of adenosine and inosine nucleosides, yielding D-ribose 1-phosphate and the respective free bases, adenine and hypoxanthine. Also catalyzes the phosphorolysis of S-methyl-5'-thioadenosine into adenine and S-methyl-5-thio-alpha-D-ribose 1-phosphate. Also has adenosine deaminase activity. The sequence is that of Purine nucleoside phosphorylase DR_1966 from Deinococcus radiodurans (strain ATCC 13939 / DSM 20539 / JCM 16871 / CCUG 27074 / LMG 4051 / NBRC 15346 / NCIMB 9279 / VKM B-1422 / R1).